A 343-amino-acid polypeptide reads, in one-letter code: Lactamase-like protein nscB (343 aa).

4 residues coordinate Zn(2+): His-118, His-120, Asp-122, and His-123. The active-site Proton donor/acceptor is the Asp-122.

Belongs to the metallo-beta-lactamase superfamily. It depends on Zn(2+) as a cofactor.

Its pathway is secondary metabolite biosynthesis. Lactamase-like protein; part of the gene cluster that mediates the biosynthesis of neosartoricin B, a prenylated anthracenone that probably exhibits T-cell antiproliferative activity, suggestive of a physiological role as an immunosuppressive agent. The non-reducing polyketide synthase nscA probably synthesizes and cyclizes the decaketide backbone. The hydrolase nscB then mediates the product release through hydrolysis followed by spontaneous decarboxylation. The prenyltransferase nscD catalyzes the addition of the dimethylallyl group to the aromatic C5. The FAD-dependent monooxygenase nscC is then responsible for the stereospecific hydroxylation at C2. Neosartoricin B can be converted into two additional compounds neosartoricins C and D. Neosartoricin C is a spirocyclic compound that is cyclized through the attack of C3 hydroxyl on C14, followed by dehydration. On the other hand, neosartoricin D is a further cyclized compound in which attack of C2 on C14 in neosartoricin C results in the formation of the acetal-containing dioxabicyclo-octanone ring. Both of these compounds are novel and possibly represent related metabolites of the gene cluster. This Arthroderma otae (strain ATCC MYA-4605 / CBS 113480) (Microsporum canis) protein is Lactamase-like protein nscB.